We begin with the raw amino-acid sequence, 493 residues long: GPI alpha-1,6-mannosyltransferase 2 (493 aa).

Over M1–R13 the chain is Cytoplasmic. The helical transmembrane segment at F14–P34 threads the bilayer. Residues D35–H77 are Lumenal-facing. A helical transmembrane segment spans residues G78–G98. The Cytoplasmic portion of the chain corresponds to T99–S113. Residues C114–L134 traverse the membrane as a helical segment. Over H135–D136 the chain is Lumenal. The helical transmembrane segment at L137–I157 threads the bilayer. At S158–N161 the chain is on the cytoplasmic side. The helical transmembrane segment at V162 to G182 threads the bilayer. Residues Q183–S192 are Lumenal-facing. Residues G193–L213 form a helical membrane-spanning segment. Residues L214–L234 are Cytoplasmic-facing. Residues V235–F255 traverse the membrane as a helical segment. Residues Q256–N327 lie on the Lumenal side of the membrane. Residues F328–T348 form a helical membrane-spanning segment. Over H349–K378 the chain is Cytoplasmic. A helical transmembrane segment spans residues V379–V399. Over Q400 to R469 the chain is Lumenal. A helical transmembrane segment spans residues C470–L490. The Cytoplasmic segment spans residues P491 to T493.

This sequence belongs to the PIGV family. Not N-glycosylated.

It localises to the endoplasmic reticulum membrane. It functions in the pathway glycolipid biosynthesis; glycosylphosphatidylinositol-anchor biosynthesis. Alpha-1,6-mannosyltransferase that catalyzes the transfer of the second mannose, via an alpha-1,6 bond, from a dolichol-phosphate-mannose (Dol-P-Man) to the alpha-D-Man-(1-&gt;4)-alpha-D-GlcN-(1-&gt;6)-(1-radyl,2-acyl-sn-glycero-3-phospho)-2-acyl-inositol (also termed H2) intermediate to generate an alpha-D-Man-(1-&gt;6)-alpha-D-Man-(1-&gt;4)-alpha-D-GlcN-(1-&gt;6)-(1-radyl,2-acyl-sn-glycero-3-phospho)-2-acyl-inositol (also termed H3) and participates in the seventh step of the glycosylphosphatidylinositol-anchor biosynthesis. Also transfers the second mannose on a 2-PEtn-alpha-D-Man-(1-&gt;4)-alpha-D-GlcN-(1-&gt;6)-(1-radyl,2-acyl-sn-glycero-3-phospho)-2-acyl-inositol (also termed H5). This Mus musculus (Mouse) protein is GPI alpha-1,6-mannosyltransferase 2.